Reading from the N-terminus, the 272-residue chain is Rhomboid-type serine protease B (272 aa).

The next 6 helical transmembrane spans lie at 30–50, 72–92, 103–123, 133–153, 164–184, and 186–206; these read LVLLVILAFWLLELQTIWSVV, PFIHVGFFHAFVNLLALTPLL, TAVALFIGPLSTFPAGIYILV, AVVGASVWIFLLLGSEAIKTF, TKIPTWTSPLFACALVSIFVP, and TSFLGHLSAIIIGYLLGLGYL. Serine 138 serves as the catalytic Nucleophile. Residue histidine 191 is part of the active site.

The protein belongs to the peptidase S54 family.

It localises to the membrane. The catalysed reaction is Cleaves type-1 transmembrane domains using a catalytic dyad composed of serine and histidine that are contributed by different transmembrane domains.. Functionally, rhomboid protease that catalyzes intramembrane proteolysis. Required for transcription factor srbA activation by mediating its release from the membrane and thereby regulating its activity under hypoxic conditions. Essential for iron homeostasis and resistance to azoles such as voriconazole. Required for virulence in murine models of invasive pulmonary aspergillosis (IPA). The polypeptide is Rhomboid-type serine protease B (Aspergillus fumigatus (strain ATCC MYA-4609 / CBS 101355 / FGSC A1100 / Af293) (Neosartorya fumigata)).